Here is a 154-residue protein sequence, read N- to C-terminus: OCIA domain-containing protein 2 (154 aa).

The region spanning 1 to 120 (MASVSTHGNQ…HSFEDQLRGA (120 aa)) is the OCIA domain. An N6-acetyllysine modification is found at lysine 41.

As to quaternary structure, interacts (via OCIA domain) with OCIAD1/ASRIJ and STAT3. As to expression, abundant in kidney, liver and brain.

It is found in the endosome. Its subcellular location is the mitochondrion. It localises to the mitochondrion inner membrane. In terms of biological role, has an essential role in the assembly of mitochondrial respiratory chain complex III. Is also required for STAT3 activation and plays a role in cell migration. The chain is OCIA domain-containing protein 2 (Ociad2) from Mus musculus (Mouse).